Reading from the N-terminus, the 175-residue chain is Ribosome maturation factor RimP (175 aa).

Residues 152–175 (EFNRPTDGPGDDGDDGGDDEAGEA) are disordered. Residues 160-175 (PGDDGDDGGDDEAGEA) show a composition bias toward acidic residues.

This sequence belongs to the RimP family.

It is found in the cytoplasm. Its function is as follows. Required for maturation of 30S ribosomal subunits. The chain is Ribosome maturation factor RimP from Nocardioides sp. (strain ATCC BAA-499 / JS614).